The primary structure comprises 1583 residues: Mediator of RNA polymerase II transcription subunit 12 (1583 aa).

Disordered regions lie at residues 1–117 and 1481–1525; these read MIPH…SLSW and SNIP…SGIP. Basic and acidic residues predominate over residues 66-79; that stretch reads DTSEREPPSKRLRL. 2 stretches are compositionally biased toward low complexity: residues 102-114 and 1490-1514; these read TPSTSTPTAKPSS and PSPAAAAASTPTPTPSSGLPPGSST.

Belongs to the Mediator complex subunit 12 family. As to quaternary structure, component of the srb8-11 complex, which itself associates with the Mediator complex.

The protein resides in the nucleus. In terms of biological role, component of the srb8-11 complex. The srb8-11 complex is a regulatory module of the Mediator complex which is itself involved in regulation of basal and activated RNA polymerase II-dependent transcription. The srb8-11 complex may be involved in the transcriptional repression of a subset of genes regulated by Mediator. It may inhibit the association of the Mediator complex with RNA polymerase II to form the holoenzyme complex. The protein is Mediator of RNA polymerase II transcription subunit 12 (srb8) of Aspergillus terreus (strain NIH 2624 / FGSC A1156).